The chain runs to 790 residues: MKRVLIPGVILCGADVAQAVDDKNMYMHFFEEMTVYAPVPVPVNGNTHYTSESIERLPTGNGNISDLLRTNPAVRMDSTQSTSLNQGDIRPEKISIHGASPYQNAYLIDGISATNNLNPANESDASSATNISGMSQGYYLDVSLLDNVTLYDSFVPVEFGRFNGGVIDAKIKRFNADDSKVKLGYRTTRSDWLTSHIDENNKSAFNQGSSGSTYYSPDFKKNFYTLSFNQELADNFGVTAGLSRRQSDITRADYVSNDGIVAGRAQYKNVIDTALSKFTWFASDRFTHDLTLKYTGSSRDYNTSTFPQSDREMGNKSYGLAWDMDTQLAWAKLRTTVGWDHISDYTRHDHDIWYTELSCTYGDITGRCTRGGLGHISQAVDNYTFKTRLDWQKFAVGNVSHQPYFGAEYIYSDAWTERHNQSESYVINAAGKKTNHTIYHKGKGRLGIDNYTLYMADRISWRNVSLMPGVRYDYDNYLSNHNISPRFMTEWDIFANQTSMITAGYNRYYGGNILDMGLRDIRNSWTESVSGNKTLTRYQDLKTPYNDELAMGLQQKIGKNVIARANYVYREAHDQISKSSRTDSATKTTITEYNNDGKTKTHSFSLSFELAEPLHIRQVDINPQIVFSYIKSKGNLSLNNGYEESNTGDNQVVYNGNLVSYDSVPVADFNNPLKISLNMDFTHQPSGLVWANTLAWQEARKARIILGKTNAQYISEYSDYKQYVDEKLDSSLTWDTRLSWTPQFLQQQNLTISADILNVLDSKTAVDTTNTGVATYASGRTFWLDVSMKF.

The TBDR plug domain occupies 37–172; that stretch reads APVPVPVNGN…NGGVIDAKIK (136 aa). The TBDR beta-barrel domain maps to 178 to 790; the sequence is DSKVKLGYRT…TFWLDVSMKF (613 aa).

Belongs to the TonB-dependent receptor family.

It localises to the cell outer membrane. This is an uncharacterized protein from Escherichia coli (strain K12).